We begin with the raw amino-acid sequence, 340 residues long: MYG1 protein C27H6.8 (340 aa).

It belongs to the MYG1 family.

The polypeptide is MYG1 protein C27H6.8 (Caenorhabditis elegans).